The following is an 87-amino-acid chain: Olfactory receptor-like protein HbT2 (87 aa).

Residues 1-8 (KLWRMTGT) are Cytoplasmic-facing. The chain crosses the membrane as a helical span at residues 9 to 29 (WLGGFCHSIIQIPVIIQLPFC). At 30-55 (GPNVIDHYFRDLQPLFKLACTDTFME) the chain is on the extracellular side. The helical transmembrane segment at 56 to 76 (GVIVLAFSGLFSVFSFLILVS) threads the bilayer. Residues 77–87 (SYIVILVNLRN) are Cytoplasmic-facing.

The protein belongs to the G-protein coupled receptor 1 family.

The protein resides in the cell membrane. Odorant receptor. The polypeptide is Olfactory receptor-like protein HbT2 (Apis mellifera ligustica (Common honeybee)).